The chain runs to 338 residues: Holliday junction branch migration complex subunit RuvB (338 aa).

A large ATPase domain (RuvB-L) region spans residues 4 to 187 (ADKDRLVSGD…FGISEHMAYY (184 aa)). ATP-binding positions include Leu26, Arg27, Gly68, Lys71, Thr72, Thr73, 134–136 (EDF), Arg177, Tyr187, and Arg224. A Mg(2+)-binding site is contributed by Thr72. The tract at residues 188–258 (SADDLSEIVK…MVDHALDQLQ (71 aa)) is small ATPAse domain (RuvB-S). Positions 261–338 (QQGLDQIDRK…AHMGMSAEQH (78 aa)) are head domain (RuvB-H). 2 residues coordinate DNA: Arg316 and Arg321.

This sequence belongs to the RuvB family. As to quaternary structure, homohexamer. Forms an RuvA(8)-RuvB(12)-Holliday junction (HJ) complex. HJ DNA is sandwiched between 2 RuvA tetramers; dsDNA enters through RuvA and exits via RuvB. An RuvB hexamer assembles on each DNA strand where it exits the tetramer. Each RuvB hexamer is contacted by two RuvA subunits (via domain III) on 2 adjacent RuvB subunits; this complex drives branch migration. In the full resolvosome a probable DNA-RuvA(4)-RuvB(12)-RuvC(2) complex forms which resolves the HJ.

The protein localises to the cytoplasm. The catalysed reaction is ATP + H2O = ADP + phosphate + H(+). Its function is as follows. The RuvA-RuvB-RuvC complex processes Holliday junction (HJ) DNA during genetic recombination and DNA repair, while the RuvA-RuvB complex plays an important role in the rescue of blocked DNA replication forks via replication fork reversal (RFR). RuvA specifically binds to HJ cruciform DNA, conferring on it an open structure. The RuvB hexamer acts as an ATP-dependent pump, pulling dsDNA into and through the RuvAB complex. RuvB forms 2 homohexamers on either side of HJ DNA bound by 1 or 2 RuvA tetramers; 4 subunits per hexamer contact DNA at a time. Coordinated motions by a converter formed by DNA-disengaged RuvB subunits stimulates ATP hydrolysis and nucleotide exchange. Immobilization of the converter enables RuvB to convert the ATP-contained energy into a lever motion, pulling 2 nucleotides of DNA out of the RuvA tetramer per ATP hydrolyzed, thus driving DNA branch migration. The RuvB motors rotate together with the DNA substrate, which together with the progressing nucleotide cycle form the mechanistic basis for DNA recombination by continuous HJ branch migration. Branch migration allows RuvC to scan DNA until it finds its consensus sequence, where it cleaves and resolves cruciform DNA. The sequence is that of Holliday junction branch migration complex subunit RuvB from Lacticaseibacillus paracasei (strain ATCC 334 / BCRC 17002 / CCUG 31169 / CIP 107868 / KCTC 3260 / NRRL B-441) (Lactobacillus paracasei).